We begin with the raw amino-acid sequence, 333 residues long: Phosphoribosylformylglycinamidine cyclo-ligase (333 aa).

It belongs to the AIR synthase family.

Its subcellular location is the cytoplasm. The catalysed reaction is 2-formamido-N(1)-(5-O-phospho-beta-D-ribosyl)acetamidine + ATP = 5-amino-1-(5-phospho-beta-D-ribosyl)imidazole + ADP + phosphate + H(+). The protein operates within purine metabolism; IMP biosynthesis via de novo pathway; 5-amino-1-(5-phospho-D-ribosyl)imidazole from N(2)-formyl-N(1)-(5-phospho-D-ribosyl)glycinamide: step 2/2. In Methanococcoides burtonii (strain DSM 6242 / NBRC 107633 / OCM 468 / ACE-M), this protein is Phosphoribosylformylglycinamidine cyclo-ligase.